The primary structure comprises 360 residues: Peptide chain release factor 1 (360 aa).

Gln-237 is modified (N5-methylglutamine).

It belongs to the prokaryotic/mitochondrial release factor family. In terms of processing, methylated by PrmC. Methylation increases the termination efficiency of RF1.

It is found in the cytoplasm. In terms of biological role, peptide chain release factor 1 directs the termination of translation in response to the peptide chain termination codons UAG and UAA. This Pseudomonas putida (strain GB-1) protein is Peptide chain release factor 1.